The primary structure comprises 378 residues: Succinyl-diaminopimelate desuccinylase (378 aa).

Zn(2+) is bound at residue H66. The active site involves D68. D99 contacts Zn(2+). The active-site Proton acceptor is E133. 3 residues coordinate Zn(2+): E134, E162, and H348.

This sequence belongs to the peptidase M20A family. DapE subfamily. Homodimer. The cofactor is Zn(2+). Co(2+) serves as cofactor.

It carries out the reaction N-succinyl-(2S,6S)-2,6-diaminopimelate + H2O = (2S,6S)-2,6-diaminopimelate + succinate. It participates in amino-acid biosynthesis; L-lysine biosynthesis via DAP pathway; LL-2,6-diaminopimelate from (S)-tetrahydrodipicolinate (succinylase route): step 3/3. In terms of biological role, catalyzes the hydrolysis of N-succinyl-L,L-diaminopimelic acid (SDAP), forming succinate and LL-2,6-diaminopimelate (DAP), an intermediate involved in the bacterial biosynthesis of lysine and meso-diaminopimelic acid, an essential component of bacterial cell walls. The chain is Succinyl-diaminopimelate desuccinylase from Halorhodospira halophila (strain DSM 244 / SL1) (Ectothiorhodospira halophila (strain DSM 244 / SL1)).